We begin with the raw amino-acid sequence, 97 residues long: Zinc metalloproteinase-disintegrin-like bothrojarin-4 (97 aa).

One can recognise a Disintegrin domain in the interval 4 to 90 (PPVCGNYFVE…DCPTDRFRRN (87 aa)). Ca(2+)-binding residues include Val-6, Asn-9, Phe-11, Glu-13, Glu-16, and Asp-19. 7 disulfides stabilise this stretch: Cys-7–Cys-36, Cys-18–Cys-31, Cys-20–Cys-26, Cys-30–Cys-53, Cys-44–Cys-50, Cys-49–Cys-75, and Cys-62–Cys-82. Asn-32 carries N-linked (GlcNAc...) asparagine glycosylation. The D/ECD-tripeptide; atypical (KCD) signature appears at 68–70 (KCD).

Belongs to the venom metalloproteinase (M12B) family. P-III subfamily. P-IIIa sub-subfamily. As to quaternary structure, monomer. Requires Zn(2+) as cofactor. In terms of tissue distribution, expressed by the venom gland.

Its subcellular location is the secreted. In terms of biological role, the hemorrhagic metalloproteinase-disintegrin-like bothrojarin-1 is a potent inhibitor of collagen-induced platelet aggregation by blockage of alpha-2/beta-1 (ITGA2/ITGB1) integrin. It does not present any fibrinogen-clotting activity. The sequence is that of Zinc metalloproteinase-disintegrin-like bothrojarin-4 from Bothrops jararaca (Jararaca).